The primary structure comprises 396 residues: Acetate kinase (396 aa).

Asn6 contacts Mg(2+). An ATP-binding site is contributed by Lys13. Position 89 (Arg89) interacts with substrate. Residue Asp145 is the Proton donor/acceptor of the active site. Residues 205–209 (HLGNG), 280–282 (DMR), and 329–333 (GVGEN) contribute to the ATP site. Glu383 is a binding site for Mg(2+).

It belongs to the acetokinase family. As to quaternary structure, homodimer. The cofactor is Mg(2+). It depends on Mn(2+) as a cofactor.

It is found in the cytoplasm. It catalyses the reaction acetate + ATP = acetyl phosphate + ADP. It participates in metabolic intermediate biosynthesis; acetyl-CoA biosynthesis; acetyl-CoA from acetate: step 1/2. Its function is as follows. Catalyzes the formation of acetyl phosphate from acetate and ATP. Can also catalyze the reverse reaction. The sequence is that of Acetate kinase from Mesoplasma florum (strain ATCC 33453 / NBRC 100688 / NCTC 11704 / L1) (Acholeplasma florum).